The sequence spans 1061 residues: DNA primase TraC (1061 aa).

The region spanning 850 to 938 (PALVIGEGYA…GKAIFPIFAP (89 aa)) is the Toprim domain. The tract at residues 1034 to 1061 (EGQRQKVQQLKQQDIEQQEQRQRRARTY) is disordered.

In terms of biological role, required for autonomous replication in E.coli. Transferred into the recipient cell during bacterial conjugation. Catalyzes the synthesis of short oligoribonucleotide primers with CpA or pCpA at their 5'-termini on a single-stranded template DNA. This is DNA primase TraC (traC) from Escherichia coli.